The primary structure comprises 279 residues: Probable endonuclease 4 (279 aa).

Zn(2+)-binding residues include histidine 68, histidine 108, glutamate 143, aspartate 177, histidine 180, histidine 214, aspartate 227, histidine 229, and glutamate 259.

Belongs to the AP endonuclease 2 family. Zn(2+) is required as a cofactor.

The catalysed reaction is Endonucleolytic cleavage to 5'-phosphooligonucleotide end-products.. Functionally, endonuclease IV plays a role in DNA repair. It cleaves phosphodiester bonds at apurinic or apyrimidinic (AP) sites, generating a 3'-hydroxyl group and a 5'-terminal sugar phosphate. This Nitrosopumilus maritimus (strain SCM1) protein is Probable endonuclease 4.